Reading from the N-terminus, the 172-residue chain is Centrin-1 (172 aa).

The segment at 1 to 30 (MASSYRKPTVASTSQKRKVGPKPELTEEQK) is disordered. EF-hand domains lie at 28–63 (EQKQEVREAFDLFDADGSGTIDVKELKVAMRALGFE), 64–99 (PRKEEMKRMIADVDKEGTGKISFNDFLAVMTQKMAE), 101–136 (DTKEEILKAFRLFDDDETGKISFKNLKRVAKELGEN), and 137–172 (LTDEELQEMIDEADRDGDGEVNEDEFLRIMKKTNLY). D41, D43, S45, T47, and E52 together coordinate Ca(2+). Ca(2+) contacts are provided by D150, D152, D154, E156, and E161.

The protein belongs to the centrin family. Monomer. Interacts with CIMAP3. Interacts with USP49.

It is found in the cytoplasm. Its subcellular location is the cytoskeleton. The protein resides in the microtubule organizing center. The protein localises to the centrosome. Its function is as follows. Plays a fundamental role in microtubule-organizing center structure and function. Plays a role in sperm cilia formation. In Bos taurus (Bovine), this protein is Centrin-1 (CETN1).